Reading from the N-terminus, the 250-residue chain is MHLKTFSNLLVFVATVAAHGYVDNVTVNGILYTGYQPNSDPYYATPPPRIIRPVQGNGPITDLTLIDLQCGGYTEGGIVGSQPANLTAGPVAAGSTVSLRWTLWPDSHSGPVITYMAKCPAAGCSTYVPGTAAVWFKIQATGRIGNTTVWGDTPLKTAGNSYSYTIPSCLSAGSYIVRHEILALHAAWTYPGVQFYPSCHQIQVTGSGTSTGPSSKVAIPGVYKATDPGIVYDMYAVQPYTIPGPAVFTC.

A signal peptide spans 1–18 (MHLKTFSNLLVFVATVAA). Residue histidine 19 participates in Cu(2+) binding. N-linked (GlcNAc...) asparagine glycosylation is found at asparagine 24 and asparagine 85. 2 disulfide bridges follow: cysteine 70-cysteine 199 and cysteine 169-cysteine 250. Position 108 (histidine 108) interacts with Cu(2+). Asparagine 146 carries an N-linked (GlcNAc...) asparagine glycan. O2 is bound by residues histidine 185 and glutamine 194. Tyrosine 196 lines the Cu(2+) pocket.

The protein belongs to the polysaccharide monooxygenase AA9 family. It depends on Cu(2+) as a cofactor.

The protein localises to the secreted. It carries out the reaction [(1-&gt;4)-beta-D-glucosyl]n+m + reduced acceptor + O2 = 4-dehydro-beta-D-glucosyl-[(1-&gt;4)-beta-D-glucosyl]n-1 + [(1-&gt;4)-beta-D-glucosyl]m + acceptor + H2O.. Functionally, lytic polysaccharide monooxygenase (LPMO) that depolymerizes crystalline and amorphous polysaccharides via the oxidation of scissile alpha- or beta-(1-4)-glycosidic bonds, yielding C1 and C4 oxidation products. Catalysis by LPMOs requires the reduction of the active-site copper from Cu(II) to Cu(I) by a reducing agent and H(2)O(2) or O(2) as a cosubstrate. The chain is AA9 family lytic polysaccharide monooxygenase F from Botryotinia fuckeliana (strain B05.10) (Noble rot fungus).